The sequence spans 403 residues: MREQAPVRFGTPLTAGATRVMLLGSGELGKEVIIALQRLGVEVIAVDRYDNAPGHQVAHRAHTIDMSDPEALLRLVEEERPHFVVPEIEAIATDALATVEERGTAVVIPTARATQLTMNREGIRRLAAEELGLPTSPYEFAESLEEVRAATERIGFPCVIKPVMSSSGKGQSTVRDTGGVETAWEYALAGGRINYGRVIVEGFVDFDYEITQLTVRAIGADGEVGTFFCEPIGHLQDSGDYVESWQPQPMSDAALARSREVAEKVTAALGGRGIFGVELFVKGDDVYFSEVSPRPHDTGLVTLRTQRLSEFELHARAILGLPVDTTLTTPGASAVIYGGVDATGIGFDGVADAMAVPETDLRLFGKPESFVRRRMGVAVSTGPDVETARSRAREAASRVEPVA.

N(1)-(5-phospho-beta-D-ribosyl)glycinamide-binding positions include 27–28 (EL) and Glu87. Residues Arg120, Lys161, 166 to 171 (SSGKGQ), 201 to 204 (EGFV), and Glu209 contribute to the ATP site. In terms of domain architecture, ATP-grasp spans 125–319 (RLAAEELGLP…EFELHARAIL (195 aa)). The Mg(2+) site is built by Glu278 and Glu290. N(1)-(5-phospho-beta-D-ribosyl)glycinamide is bound by residues Asp297, Lys366, and 373 to 374 (RR). The interval 382–403 (GPDVETARSRAREAASRVEPVA) is disordered. Basic and acidic residues predominate over residues 386–397 (ETARSRAREAAS).

The protein belongs to the PurK/PurT family. Homodimer.

The catalysed reaction is N(1)-(5-phospho-beta-D-ribosyl)glycinamide + formate + ATP = N(2)-formyl-N(1)-(5-phospho-beta-D-ribosyl)glycinamide + ADP + phosphate + H(+). The protein operates within purine metabolism; IMP biosynthesis via de novo pathway; N(2)-formyl-N(1)-(5-phospho-D-ribosyl)glycinamide from N(1)-(5-phospho-D-ribosyl)glycinamide (formate route): step 1/1. Functionally, involved in the de novo purine biosynthesis. Catalyzes the transfer of formate to 5-phospho-ribosyl-glycinamide (GAR), producing 5-phospho-ribosyl-N-formylglycinamide (FGAR). Formate is provided by PurU via hydrolysis of 10-formyl-tetrahydrofolate. This chain is Formate-dependent phosphoribosylglycinamide formyltransferase, found in Rhodococcus jostii (strain RHA1).